Here is a 245-residue protein sequence, read N- to C-terminus: 8-amino-3,8-dideoxy-manno-octulosonate cytidylyltransferase (245 aa).

Belongs to the KdsB family.

The protein localises to the cytoplasm. It carries out the reaction 8-amino-3,8-dideoxy-alpha-D-manno-octulosonate + CTP = CMP-8-amino-3,8-dideoxy-alpha-D-manno-oct-2-ulosonate + diphosphate. The protein operates within bacterial outer membrane biogenesis; lipopolysaccharide biosynthesis. In terms of biological role, activates KDO8N (a required 8-carbon sugar) for incorporation into bacterial lipopolysaccharide in the Shewanella genus. In Shewanella sp. (strain MR-7), this protein is 8-amino-3,8-dideoxy-manno-octulosonate cytidylyltransferase.